The following is a 67-amino-acid chain: RDGYPLASNGCKFGCSGLGENNPTCNHVCEKKAGSDYGYCYAWTCYCEHVAEGTVLWGDSGTGPCRS.

The LCN-type CS-alpha/beta domain maps to 1–66 (RDGYPLASNG…WGDSGTGPCR (66 aa)). 4 cysteine pairs are disulfide-bonded: C11–C65, C15–C40, C25–C45, and C29–C47.

In terms of tissue distribution, expressed by the venom gland.

It localises to the secreted. Alpha toxins bind voltage-independently at site-3 of sodium channels (Nav) and inhibit the inactivation of the activated channels, thereby blocking neuronal transmission. This toxin binds, in vitro, to sodium channels and inhibits the inactivation of the activated channels. Seems not toxic to mice, crickets and sweet-water shrimps. The polypeptide is Alpha-toxin Cn12 (Centruroides noxius (Mexican scorpion)).